The primary structure comprises 192 residues: Nucleotidase CA_C3379 (192 aa).

It belongs to the 5'(3')-deoxyribonucleotidase family. The cofactor is Mg(2+).

The enzyme catalyses sugar phosphate + H2O = sugar + phosphate.. In terms of biological role, catalyzes the dephosphorylation of nucleotide monophosphates and of different sugar phosphates in vitro. This is Nucleotidase CA_C3379 from Clostridium acetobutylicum (strain ATCC 824 / DSM 792 / JCM 1419 / IAM 19013 / LMG 5710 / NBRC 13948 / NRRL B-527 / VKM B-1787 / 2291 / W).